We begin with the raw amino-acid sequence, 168 residues long: Ribosome maturation factor RimP (168 aa).

The protein belongs to the RimP family.

The protein resides in the cytoplasm. In terms of biological role, required for maturation of 30S ribosomal subunits. The chain is Ribosome maturation factor RimP from Bordetella parapertussis (strain 12822 / ATCC BAA-587 / NCTC 13253).